The sequence spans 167 residues: Gametocyte-specific factor 1 (167 aa).

A Phosphoserine modification is found at S8. 2 CHHC U11-48K-type zinc fingers span residues 14–41 and 48–75; these read LLQC…RKNH and LATC…DDRS. Residues C17, H23, H33, C37, C51, H57, H67, and C71 each coordinate Zn(2+).

Belongs to the UPF0224 (FAM112) family.

It localises to the cytoplasm. Its function is as follows. Required for spermatogenesis and is involved in the suppression of retrotransposon transcription in male germ cells. The chain is Gametocyte-specific factor 1 (GTSF1) from Homo sapiens (Human).